The sequence spans 224 residues: Germin-like protein 8-4 (224 aa).

Residues 1–23 form the signal peptide; the sequence is MASSSSLYLLAALLALASWQAIA. A disulfide bridge connects residues cysteine 33 and cysteine 48. A Cupin type-1 domain is found at 70–213; sequence STMNKVGSNV…AFQVEKKVID (144 aa). An N-linked (GlcNAc...) asparagine glycan is attached at asparagine 78. Positions 111, 113, 118, and 158 each coordinate Mn(2+).

It belongs to the germin family. As to quaternary structure, oligomer (believed to be a pentamer but probably hexamer).

The protein localises to the secreted. Its subcellular location is the extracellular space. The protein resides in the apoplast. In terms of biological role, plays a role in broad-spectrum disease resistance. Probably has no oxalate oxidase activity even if the active site is conserved. In Oryza sativa subsp. japonica (Rice), this protein is Germin-like protein 8-4 (GER1).